We begin with the raw amino-acid sequence, 281 residues long: ATP synthase gamma chain (281 aa).

The protein belongs to the ATPase gamma chain family. In terms of assembly, F-type ATPases have 2 components, CF(1) - the catalytic core - and CF(0) - the membrane proton channel. CF(1) has five subunits: alpha(3), beta(3), gamma(1), delta(1), epsilon(1). CF(0) has three main subunits: a, b and c.

The protein localises to the cell membrane. Functionally, produces ATP from ADP in the presence of a proton gradient across the membrane. The gamma chain is believed to be important in regulating ATPase activity and the flow of protons through the CF(0) complex. The sequence is that of ATP synthase gamma chain from Mesoplasma florum (strain ATCC 33453 / NBRC 100688 / NCTC 11704 / L1) (Acholeplasma florum).